The primary structure comprises 322 residues: MGDFSYLESFCGVLCFFFFCTFFLSFHHRRDSLARHKFSFFVFHKQRRRELIISSLRRNNLNWSRCFLVRALPSRLITVGHDFRKAPVNMKISHGGVCIFIMGVILSNAKKIQFTGKTPLGSELHIGKVRSTLRGIDQLHGPTFHSICGNFIIYKPSLKTPFMFEHDGSRPALLQSRPTEGAKVSTNGRGFSSRPTGEGNFFGPKGRRPEMALGFPHTSLPLRKKGFTVLEHNSFSHWLTMFPEKRFYFSNQETSTTKVAIHTNLFTDLYALIGTGSFETGWYMTVIKLPFIFYIWIGFIMASLGGLLSLFRKLTFYRLDWN.

The interval 174–207 is disordered; that stretch reads LQSRPTEGAKVSTNGRGFSSRPTGEGNFFGPKGR. The span at 184–195 shows a compositional bias: polar residues; it reads VSTNGRGFSSRP.

Its subcellular location is the mitochondrion. This is an uncharacterized protein from Marchantia polymorpha (Common liverwort).